The sequence spans 23 residues: Coenzyme PQQ synthesis protein A (23 aa).

The segment at residues 15–19 (EVTLY) is a cross-link (pyrroloquinoline quinone (Glu-Tyr)).

This sequence belongs to the PqqA family.

The protein operates within cofactor biosynthesis; pyrroloquinoline quinone biosynthesis. In terms of biological role, required for coenzyme pyrroloquinoline quinone (PQQ) biosynthesis. PQQ is probably formed by cross-linking a specific glutamate to a specific tyrosine residue and excising these residues from the peptide. The chain is Coenzyme PQQ synthesis protein A from Pseudomonas aeruginosa (strain UCBPP-PA14).